A 408-amino-acid polypeptide reads, in one-letter code: Na(+)-translocating NADH-quinone reductase subunit F (408 aa).

Residues 4–24 (IYLGVGMFIAIVLALVLIIMF) traverse the membrane as a helical segment. The 95-residue stretch at 33 to 127 (GEVTISINGD…DMDIELPEEI (95 aa)) folds into the 2Fe-2S ferredoxin-type domain. [2Fe-2S] cluster is bound by residues Cys-70, Cys-76, Cys-79, and Cys-111. Residues 130–270 (IKKWDCEVIS…SGPFGEFFAK (141 aa)) form the FAD-binding FR-type domain.

This sequence belongs to the NqrF family. In terms of assembly, composed of six subunits; NqrA, NqrB, NqrC, NqrD, NqrE and NqrF. [2Fe-2S] cluster is required as a cofactor. Requires FAD as cofactor.

Its subcellular location is the cell inner membrane. The catalysed reaction is a ubiquinone + n Na(+)(in) + NADH + H(+) = a ubiquinol + n Na(+)(out) + NAD(+). Its function is as follows. NQR complex catalyzes the reduction of ubiquinone-1 to ubiquinol by two successive reactions, coupled with the transport of Na(+) ions from the cytoplasm to the periplasm. The first step is catalyzed by NqrF, which accepts electrons from NADH and reduces ubiquinone-1 to ubisemiquinone by a one-electron transfer pathway. This is Na(+)-translocating NADH-quinone reductase subunit F from Pseudoalteromonas atlantica (strain T6c / ATCC BAA-1087).